The primary structure comprises 116 residues: Mitochondrial import inner membrane translocase subunit PAM16 like 2 (116 aa).

A mitochondrion-targeting transit peptide spans 1–27 (MAGRLLANLIVMGSGIIGRAVFQAYRQ). The J-like stretch occupies residues 57–106 (EARQILGVTEKTSWEEILQKYDKLFENNAKAGSFYLQSKVHRAKECLEVV).

The protein belongs to the TIM16/PAM16 family. As to expression, expressed constitutively and ubiquitously, except in root tips, at low levels.

The protein resides in the mitochondrion inner membrane. Its subcellular location is the cytoplasm. Functionally, regulates ATP-dependent protein translocation into the mitochondrial matrix. Involved in the uptake of thaxtomin, a phytotoxin produced by Streptomyces bacteria, that causes dramatic cell swelling, reduced seedling growth, and inhibition of cellulose synthesis. Modulates polar auxin transport. Involved in importing a negative regulator of plant immunity into mitochondria, thus protecting plants from over-accumulation of reactive oxygen species (ROS) and preventing autoimmunity. Confers sensitivity to virulent pathogens such as the oomycete H.arabidopsidis Noco2 and the bacteria P.syringae pv. maculicola ES4326. This Arabidopsis thaliana (Mouse-ear cress) protein is Mitochondrial import inner membrane translocase subunit PAM16 like 2.